Consider the following 166-residue polypeptide: Phosphopantetheine adenylyltransferase (166 aa).

A substrate-binding site is contributed by T9. Residues 9–10 (TF) and H17 each bind ATP. Positions 41, 73, and 87 each coordinate substrate. Residues 88–90 (GLR), E98, and 123–129 (YQFISGT) each bind ATP.

It belongs to the bacterial CoaD family. In terms of assembly, homohexamer. Requires Mg(2+) as cofactor.

It localises to the cytoplasm. The enzyme catalyses (R)-4'-phosphopantetheine + ATP + H(+) = 3'-dephospho-CoA + diphosphate. The protein operates within cofactor biosynthesis; coenzyme A biosynthesis; CoA from (R)-pantothenate: step 4/5. In terms of biological role, reversibly transfers an adenylyl group from ATP to 4'-phosphopantetheine, yielding dephospho-CoA (dPCoA) and pyrophosphate. The chain is Phosphopantetheine adenylyltransferase from Burkholderia mallei (strain NCTC 10229).